The chain runs to 463 residues: Fumarate hydratase class II (463 aa).

Substrate is bound by residues 95–97 (SGT), 126–129 (HPND), 136–138 (SSN), and Thr-184. His-185 serves as the catalytic Proton donor/acceptor. Ser-315 is a catalytic residue. Substrate contacts are provided by residues Ser-316 and 321 to 323 (KIN).

It belongs to the class-II fumarase/aspartase family. Fumarase subfamily. In terms of assembly, homotetramer.

The protein localises to the cytoplasm. It catalyses the reaction (S)-malate = fumarate + H2O. Its pathway is carbohydrate metabolism; tricarboxylic acid cycle; (S)-malate from fumarate: step 1/1. Its function is as follows. Involved in the TCA cycle. Catalyzes the stereospecific interconversion of fumarate to L-malate. This chain is Fumarate hydratase class II, found in Chlamydia muridarum (strain MoPn / Nigg).